We begin with the raw amino-acid sequence, 214 residues long: Ribonuclease HII (214 aa).

An RNase H type-2 domain is found at 26 to 214; sequence EIVCGVDEAG…PVREAFDLIR (189 aa). Asp32, Glu33, and Asp124 together coordinate a divalent metal cation.

It belongs to the RNase HII family. Mn(2+) serves as cofactor. Requires Mg(2+) as cofactor.

The protein resides in the cytoplasm. It carries out the reaction Endonucleolytic cleavage to 5'-phosphomonoester.. Endonuclease that specifically degrades the RNA of RNA-DNA hybrids. This Burkholderia thailandensis (strain ATCC 700388 / DSM 13276 / CCUG 48851 / CIP 106301 / E264) protein is Ribonuclease HII.